Consider the following 346-residue polypeptide: N-acetyl-gamma-glutamyl-phosphate reductase (346 aa).

Cysteine 150 is an active-site residue.

The protein belongs to the NAGSA dehydrogenase family. Type 1 subfamily.

It localises to the cytoplasm. It carries out the reaction N-acetyl-L-glutamate 5-semialdehyde + phosphate + NADP(+) = N-acetyl-L-glutamyl 5-phosphate + NADPH + H(+). It functions in the pathway amino-acid biosynthesis; L-arginine biosynthesis; N(2)-acetyl-L-ornithine from L-glutamate: step 3/4. Functionally, catalyzes the NADPH-dependent reduction of N-acetyl-5-glutamyl phosphate to yield N-acetyl-L-glutamate 5-semialdehyde. The protein is N-acetyl-gamma-glutamyl-phosphate reductase of Desulforudis audaxviator (strain MP104C).